The chain runs to 412 residues: Proline-rich protein 30 (412 aa).

Polar residues-rich tracts occupy residues 1–15 (MLPQ…QTSV) and 23–39 (GFSQ…QPLS). Disordered regions lie at residues 1-88 (MLPQ…HPYS), 123-174 (PLTP…SNRQ), and 317-412 (RPKE…KSSV). Low complexity-rich tracts occupy residues 50–59 (PFSSTQSRRP), 126–142 (PSFS…PHSP), and 334–350 (QLPA…ADPV). Over residues 353-372 (TPSQTRSFRSAGLQSPNSPR) the composition is skewed to polar residues.

In Homo sapiens (Human), this protein is Proline-rich protein 30 (PRR30).